Consider the following 792-residue polypeptide: Lon protease (792 aa).

Positions 16-211 (DAVVVVPVSN…KVSAFLAQRL (196 aa)) constitute a Lon N-terminal domain. Residue 361 to 368 (GPPGVGKT) participates in ATP binding. The Lon proteolytic domain occupies 597–778 (TSVPGVATGL…EDAIEAGLDP (182 aa)). Catalysis depends on residues Ser-684 and Lys-727.

It belongs to the peptidase S16 family. Homohexamer. Organized in a ring with a central cavity.

It localises to the cytoplasm. The enzyme catalyses Hydrolysis of proteins in presence of ATP.. Its function is as follows. ATP-dependent serine protease that mediates the selective degradation of mutant and abnormal proteins as well as certain short-lived regulatory proteins. Required for cellular homeostasis and for survival from DNA damage and developmental changes induced by stress. Degrades polypeptides processively to yield small peptide fragments that are 5 to 10 amino acids long. Binds to DNA in a double-stranded, site-specific manner. The sequence is that of Lon protease from Phenylobacterium zucineum (strain HLK1).